The sequence spans 619 residues: MSKIIGIDLGTTNSCVAVMEGGEPVVITNSEGARTTPSVVSFQANGERLVGQVAKRQAITNPEKTIMSIKRHMGTDYKVNIDGKDYTPQEISAMILQKLKADAEAYLGEKVTEAVITVPAYFNDAERQATKDAGRIAGLDVKRIINEPTAASLAYGLDKMDSAHKILVYDLGGGTFDVSILDLGDGVFEVVSTNGDARLGGDDFDQRIIDYIAEDFKAQNGIDLRQDKMALQRLKEAAEKAKIELSSSTQTLINLPFITADATGPKHIDMTLTRAKFNELTHDLVERTIDIMKEALKSGNVSLNDIDKVILVGGSTRIPAVQEAVKNFTGKEPSKGVNPDECVAMGAAIQAGVLTGDVKDVLLLDVTPLTLGIETLGGVATPLIERNTTIPARKSQIFSTAADNQTSVEIHVVQGERQMAADNKTLGRFTLSGIAPAPRGIPQIEVAFDIDANGIVKVSATDKATGKEANITITASTNLSDAEIDKAVKEAEQFAEEDKKRKEAIEVKNNAEQIVYQTEKTLNELGDKVSAEEKSEIEAKIEEVKKVKDGDDIEAIKKAMEDLTQAFYKISEKLYQQNGGAQGEGFDPNNMGGANAGTGAANSNDDNVVDADFEVQDDK.

Position 175 is a phosphothreonine; by autocatalysis (T175). The tract at residues 578 to 619 (NGGAQGEGFDPNNMGGANAGTGAANSNDDNVVDADFEVQDDK) is disordered. Positions 589-606 (NNMGGANAGTGAANSNDD) are enriched in low complexity. The segment covering 607–619 (NVVDADFEVQDDK) has biased composition (acidic residues).

It belongs to the heat shock protein 70 family.

Functionally, acts as a chaperone. The sequence is that of Chaperone protein DnaK from Clostridium perfringens (strain SM101 / Type A).